The primary structure comprises 356 residues: NADH-quinone oxidoreductase subunit H (356 aa).

8 helical membrane passes run 18–38 (IVMVAQSVLLLVVLLIAIAYI), 87–107 (GVFLLAPLVTCVLALAAWAVI), 120–140 (VGILYIFAISSLSIYGIIMAG), 166–186 (IGFVFITVLLCAGSLNLSAIV), 202–222 (WLTFLNWYWLPLLPMFVVFYV), 265–285 (AITTMCAMGAILFMGGWLPPI), 292–312 (WVPGVIWFSLKLFFMFFLFAM), and 328–348 (LGWKVFLPLSLAMVVIVAGVL).

Belongs to the complex I subunit 1 family. NDH-1 is composed of 14 different subunits. Subunits NuoA, H, J, K, L, M, N constitute the membrane sector of the complex.

It localises to the cell inner membrane. It catalyses the reaction a quinone + NADH + 5 H(+)(in) = a quinol + NAD(+) + 4 H(+)(out). NDH-1 shuttles electrons from NADH, via FMN and iron-sulfur (Fe-S) centers, to quinones in the respiratory chain. The immediate electron acceptor for the enzyme in this species is believed to be ubiquinone. Couples the redox reaction to proton translocation (for every two electrons transferred, four hydrogen ions are translocated across the cytoplasmic membrane), and thus conserves the redox energy in a proton gradient. This subunit may bind ubiquinone. This chain is NADH-quinone oxidoreductase subunit H, found in Nitrobacter hamburgensis (strain DSM 10229 / NCIMB 13809 / X14).